We begin with the raw amino-acid sequence, 124 residues long: Fluoride-specific ion channel FluC (124 aa).

The next 4 membrane-spanning stretches (helical) occupy residues 5–25 (LVVF…NLAA), 36–56 (TMII…WFAV), 70–90 (TGIL…FLLM), and 100–120 (LYVL…LAVI). Residues glycine 74 and threonine 77 each coordinate Na(+).

Belongs to the fluoride channel Fluc/FEX (TC 1.A.43) family.

Its subcellular location is the cell inner membrane. It carries out the reaction fluoride(in) = fluoride(out). With respect to regulation, na(+) is not transported, but it plays an essential structural role and its presence is essential for fluoride channel function. In terms of biological role, fluoride-specific ion channel. Important for reducing fluoride concentration in the cell, thus reducing its toxicity. The sequence is that of Fluoride-specific ion channel FluC from Methylobacterium nodulans (strain LMG 21967 / CNCM I-2342 / ORS 2060).